Reading from the N-terminus, the 843-residue chain is Protein P (843 aa).

Residues M1–Q177 form a terminal protein domain (TP) region. A spacer region spans residues E178–L346. The tract at residues T249 to A301 is disordered. Composition is skewed to polar residues over residues T262–F276 and N286–G299. Residues E347–Q690 form a polymerase/reverse transcriptase domain (RT) region. In terms of domain architecture, Reverse transcriptase spans E357–I600. Mg(2+) is bound by residues D429, D551, and D552.

It belongs to the hepadnaviridae P protein family.

The enzyme catalyses DNA(n) + a 2'-deoxyribonucleoside 5'-triphosphate = DNA(n+1) + diphosphate. The catalysed reaction is Endonucleolytic cleavage to 5'-phosphomonoester.. Activated by host HSP70 and HSP40 in vitro to be able to bind the epsilon loop of the pgRNA. Because deletion of the RNase H region renders the protein partly chaperone-independent, the chaperones may be needed indirectly to relieve occlusion of the RNA-binding site by this domain. Inhibited by several reverse-transcriptase inhibitors: Lamivudine, Adefovir and Entecavir. Its function is as follows. Multifunctional enzyme that converts the viral RNA genome into dsDNA in viral cytoplasmic capsids. This enzyme displays a DNA polymerase activity that can copy either DNA or RNA templates, and a ribonuclease H (RNase H) activity that cleaves the RNA strand of RNA-DNA heteroduplexes in a partially processive 3'- to 5'-endonucleasic mode. Neo-synthesized pregenomic RNA (pgRNA) are encapsidated together with the P protein, and reverse-transcribed inside the nucleocapsid. Initiation of reverse-transcription occurs first by binding the epsilon loop on the pgRNA genome, and is initiated by protein priming, thereby the 5'-end of (-)DNA is covalently linked to P protein. Partial (+)DNA is synthesized from the (-)DNA template and generates the relaxed circular DNA (RC-DNA) genome. After budding and infection, the RC-DNA migrates in the nucleus, and is converted into a plasmid-like covalently closed circular DNA (cccDNA). The activity of P protein does not seem to be necessary for cccDNA generation, and is presumably released from (+)DNA by host nuclear DNA repair machinery. This is Protein P from Homo sapiens (Human).